A 409-amino-acid polypeptide reads, in one-letter code: Aspartic protease pepA (409 aa).

Positions 1 to 19 are cleaved as a signal peptide; that stretch reads MPSIVSLTAALTFVGAVIA. The propeptide at 20–65 is activation peptide; it reads SPVEKRSAFSVEQVPHTTYLKNGPAQKVKTLRKYGKPVPQSLLDAA. The region spanning 97 to 404 is the Peptidase A1 domain; the sequence is YLSPVTVGST…PDSPPRIGLA (308 aa). Active-site residues include D113 and D293. C329 and C364 are oxidised to a cystine. A glycan (N-linked (GlcNAc...) asparagine) is linked at N335.

Belongs to the peptidase A1 family. Monomer.

The protein resides in the secreted. Secreted aspartic endopeptidase that allows assimilation of proteinaceous substrates. The scissile peptide bond is attacked by a nucleophilic water molecule activated by two aspartic residues in the active site. Shows a broad primary substrate specificity. Favors hydrophobic residues at the P1 and P1' positions. This is Aspartic protease pepA from Leptosphaeria maculans (strain JN3 / isolate v23.1.3 / race Av1-4-5-6-7-8) (Blackleg fungus).